The primary structure comprises 310 residues: Bifunctional protein FolD 3, chloroplastic (310 aa).

A chloroplast-targeting transit peptide spans 1-48 (MFTDCSSSTTSRLIHLYNRNGVFLPRPSVSQFSLRTTASTWRCTLSIR).

This sequence belongs to the tetrahydrofolate dehydrogenase/cyclohydrolase family. In terms of assembly, homodimer.

Its subcellular location is the plastid. It localises to the chloroplast. The catalysed reaction is (6R)-5,10-methylene-5,6,7,8-tetrahydrofolate + NADP(+) = (6R)-5,10-methenyltetrahydrofolate + NADPH. It carries out the reaction (6R)-5,10-methenyltetrahydrofolate + H2O = (6R)-10-formyltetrahydrofolate + H(+). It functions in the pathway one-carbon metabolism; tetrahydrofolate interconversion. Its function is as follows. Catalyzes the oxidation of 5,10-methylenetetrahydrofolate to 5,10-methenyltetrahydrofolate and then the hydrolysis of 5,10-methenyltetrahydrofolate to 10-formyltetrahydrofolate. The chain is Bifunctional protein FolD 3, chloroplastic (FOLD3) from Arabidopsis thaliana (Mouse-ear cress).